A 379-amino-acid polypeptide reads, in one-letter code: Glucose-1-phosphate adenylyltransferase (379 aa).

Residues Gly-164, 179–180 (EK), and Ser-190 each bind alpha-D-glucose 1-phosphate.

This sequence belongs to the bacterial/plant glucose-1-phosphate adenylyltransferase family. Homotetramer.

It carries out the reaction alpha-D-glucose 1-phosphate + ATP + H(+) = ADP-alpha-D-glucose + diphosphate. Its pathway is glycan biosynthesis; glycogen biosynthesis. In terms of biological role, involved in the biosynthesis of ADP-glucose, a building block required for the elongation reactions to produce glycogen. Catalyzes the reaction between ATP and alpha-D-glucose 1-phosphate (G1P) to produce pyrophosphate and ADP-Glc. The protein is Glucose-1-phosphate adenylyltransferase of Lactiplantibacillus plantarum (strain ATCC BAA-793 / NCIMB 8826 / WCFS1) (Lactobacillus plantarum).